A 1070-amino-acid polypeptide reads, in one-letter code: Carbamoyl phosphate synthase large chain (1070 aa).

The tract at residues 1-401 (MPKRDDIKTI…ALLKAVRSLE (401 aa)) is carboxyphosphate synthetic domain. ATP-binding residues include arginine 129, arginine 169, glycine 175, glycine 176, lysine 208, isoleucine 210, glutamate 215, glycine 241, isoleucine 242, histidine 243, glutamine 284, and glutamate 298. In terms of domain architecture, ATP-grasp 1 spans 133–327 (RDLMNELGEP…IAKLAAKIAV (195 aa)). Residues glutamine 284, glutamate 298, and asparagine 300 each coordinate Mg(2+). Positions 284, 298, and 300 each coordinate Mn(2+). The segment at 402–546 (VGADHLLLEE…YSTYEEENES (145 aa)) is oligomerization domain. A carbamoyl phosphate synthetic domain region spans residues 547-929 (TRSAKESVIV…ALYKGFVASG (383 aa)). An ATP-grasp 2 domain is found at 671 to 861 (EKALEILQIP…MANVATRVIL (191 aa)). Residues arginine 707, arginine 746, valine 748, glutamate 752, glycine 777, valine 778, histidine 779, serine 780, glutamine 820, and glutamate 832 each contribute to the ATP site. Glutamine 820, glutamate 832, and asparagine 834 together coordinate Mg(2+). Mn(2+)-binding residues include glutamine 820, glutamate 832, and asparagine 834. The MGS-like domain occupies 930 to 1070 (TTMHDYGTVL…SEVKQPKVRV (141 aa)). The tract at residues 930–1070 (TTMHDYGTVL…SEVKQPKVRV (141 aa)) is allosteric domain.

This sequence belongs to the CarB family. In terms of assembly, composed of two chains; the small (or glutamine) chain promotes the hydrolysis of glutamine to ammonia, which is used by the large (or ammonia) chain to synthesize carbamoyl phosphate. Tetramer of heterodimers (alpha,beta)4. It depends on Mg(2+) as a cofactor. The cofactor is Mn(2+).

It catalyses the reaction hydrogencarbonate + L-glutamine + 2 ATP + H2O = carbamoyl phosphate + L-glutamate + 2 ADP + phosphate + 2 H(+). The catalysed reaction is hydrogencarbonate + NH4(+) + 2 ATP = carbamoyl phosphate + 2 ADP + phosphate + 2 H(+). It functions in the pathway amino-acid biosynthesis; L-arginine biosynthesis; carbamoyl phosphate from bicarbonate: step 1/1. It participates in pyrimidine metabolism; UMP biosynthesis via de novo pathway; (S)-dihydroorotate from bicarbonate: step 1/3. Large subunit of the glutamine-dependent carbamoyl phosphate synthetase (CPSase). CPSase catalyzes the formation of carbamoyl phosphate from the ammonia moiety of glutamine, carbonate, and phosphate donated by ATP, constituting the first step of 2 biosynthetic pathways, one leading to arginine and/or urea and the other to pyrimidine nucleotides. The large subunit (synthetase) binds the substrates ammonia (free or transferred from glutamine from the small subunit), hydrogencarbonate and ATP and carries out an ATP-coupled ligase reaction, activating hydrogencarbonate by forming carboxy phosphate which reacts with ammonia to form carbamoyl phosphate. The chain is Carbamoyl phosphate synthase large chain from Listeria welshimeri serovar 6b (strain ATCC 35897 / DSM 20650 / CCUG 15529 / CIP 8149 / NCTC 11857 / SLCC 5334 / V8).